Reading from the N-terminus, the 88-residue chain is Small ribosomal subunit protein uS15 (88 aa).

It belongs to the universal ribosomal protein uS15 family. As to quaternary structure, part of the 30S ribosomal subunit. Forms a bridge to the 50S subunit in the 70S ribosome, contacting the 23S rRNA.

Functionally, one of the primary rRNA binding proteins, it binds directly to 16S rRNA where it helps nucleate assembly of the platform of the 30S subunit by binding and bridging several RNA helices of the 16S rRNA. In terms of biological role, forms an intersubunit bridge (bridge B4) with the 23S rRNA of the 50S subunit in the ribosome. The polypeptide is Small ribosomal subunit protein uS15 (Mycoplasmopsis synoviae (strain 53) (Mycoplasma synoviae)).